Reading from the N-terminus, the 176-residue chain is MPTIRVQEADFDLGAEIAALRAGRPQIGAVASFIGTVRDINDGSGVSEMELEHYPGMTEKALANIVDAAMQRWDLIDALVIHRVGKLRPEDQIVLVAVASGHRGEAFAACEFIMDYLKSEAPFWKKEQTAQGARWVDARVTDERALARWGIVTDNASAATAQAASANDQNQKDRDA.

Substrate contacts are provided by residues 36–38 (TVR), 102–103 (HR), Lys-118, and 125–127 (KKE).

Belongs to the MoaE family. As to quaternary structure, heterotetramer of 2 MoaD subunits and 2 MoaE subunits. Also stable as homodimer. The enzyme changes between these two forms during catalysis.

It catalyses the reaction 2 [molybdopterin-synthase sulfur-carrier protein]-C-terminal-Gly-aminoethanethioate + cyclic pyranopterin phosphate + H2O = molybdopterin + 2 [molybdopterin-synthase sulfur-carrier protein]-C-terminal Gly-Gly + 2 H(+). The protein operates within cofactor biosynthesis; molybdopterin biosynthesis. Converts molybdopterin precursor Z into molybdopterin. This requires the incorporation of two sulfur atoms into precursor Z to generate a dithiolene group. The sulfur is provided by MoaD. This is Molybdopterin synthase catalytic subunit (moaE) from Ralstonia nicotianae (strain ATCC BAA-1114 / GMI1000) (Ralstonia solanacearum).